A 308-amino-acid polypeptide reads, in one-letter code: Polyprenyl-phosphate transporter (308 aa).

Transmembrane regions (helical) follow at residues 15–35 (GLAM…IAFI), 69–89 (INGL…ATLA), 91–111 (LISW…FGLI), 130–150 (LLWL…KPLH), 163–183 (AIAI…LLLI), 200–220 (ILLI…HILS), 228–248 (DVTL…IWPW), and 282–302 (PSQW…VLGL).

It belongs to the PopT family.

The protein resides in the cell inner membrane. Its activity is regulated as follows. Active in alkaline conditions. Functionally, flippase that catalyzes the transport of undecaprenyl phosphate (UndP) across the cytoplasmic membrane, from the external side to the cytoplasmic side. Is involved in UndP recycling during peptidoglycan synthesis. Required for cell shape maintenance at alkaline pH and peptidoglycan maintenance. Required by the cholera pathogen for growth and cell shape maintenance in the intestine. In Vibrio cholerae serotype O1 (strain ATCC 39315 / El Tor Inaba N16961), this protein is Polyprenyl-phosphate transporter.